Consider the following 985-residue polypeptide: Ankyrin repeat domain-containing protein 24 (985 aa).

ANK repeat units follow at residues 52 to 81, 85 to 114, 118 to 147, 151 to 180, and 184 to 213; these read EGKSAFHLAAMRGAAGCLEVMLAQGADVMS, AGYNALHLAAKYGHPECLKQLLEASCVVDI, SGWTALHHAAAGGCLSCSKLLCSFKAHMNP, SGATPLIIAAQMCHTDLCRLLLQQGAATND, and QGRTALMLACEGGSPETVEVLLQGGAQLSI. Disordered stretches follow at residues 243 to 293, 311 to 360, 386 to 412, 476 to 503, and 594 to 614; these read RSSP…DRDA, IRGL…LGRE, QDEEGEMPDFPGADALMPKNQSPSAEE, YTEAMHSQQQQQEGEPPRAQEGEETAYQ, and DNAESEPVAAEDTGGKENPGM. Residues 291 to 488 adopt a coiled-coil conformation; it reads RDAYEEIVRL…AMHSQQQQQE (198 aa). Basic and acidic residues-rich tracts occupy residues 311–326 and 349–360; these read IRGLEQHKERRRKEPL and EKQEEKESLGRE.

As to quaternary structure, homodimer. Interacts (via C-terminal domain) with TRIOBP (via C-terminal domain) isoform 4; recruits TRIOBP isoform 4 to stereocilia rootlets. Expressed in vestibular hair bundles.

The protein localises to the cell membrane. Its subcellular location is the cell projection. It localises to the stereocilium. Functionally, component of the stereocilia rootlet in hair cells of inner ear. Bridges the apical plasma membrane with the lower rootlet and maintains normal distribution of TRIOBP, thereby reinforcing stereocilia insertion points and organizing rootlets for hearing with long-term resilience. The polypeptide is Ankyrin repeat domain-containing protein 24 (Ankrd24) (Mus musculus (Mouse)).